The primary structure comprises 202 residues: V-type proton ATPase subunit E (202 aa).

It belongs to the V-ATPase E subunit family.

Produces ATP from ADP in the presence of a proton gradient across the membrane. The sequence is that of V-type proton ATPase subunit E from Halothermothrix orenii (strain H 168 / OCM 544 / DSM 9562).